Here is a 254-residue protein sequence, read N- to C-terminus: MSRRILIAGNWKMNMRAESGASLAKGIVDAVGKSPAVEVVLCPPSVYLSGVADAVVGTPVELGAQNLYAAEDGAFTGEVNASMLTDVGCRFVILGHSERRQLMGETDACVAKKLHAALAGNLVPIVCVGETLEQREADDTESVIETQIRGSLEGLDEARAANIVIAYEPVWAIGTGKTASKEQAEAVHAFIRELLGKMFSTEVAEQIRIQYGGSVKPGNAEELLSQPNIDGALVGGSSLKVDDFAGIIKAAPSA.

10–12 contacts substrate; that stretch reads NWK. Residue histidine 96 is the Electrophile of the active site. The Proton acceptor role is filled by glutamate 168. Substrate is bound by residues glycine 174, serine 214, and 235-236; that span reads GG.

Belongs to the triosephosphate isomerase family. Homodimer.

The protein localises to the cytoplasm. The catalysed reaction is D-glyceraldehyde 3-phosphate = dihydroxyacetone phosphate. It participates in carbohydrate biosynthesis; gluconeogenesis. The protein operates within carbohydrate degradation; glycolysis; D-glyceraldehyde 3-phosphate from glycerone phosphate: step 1/1. Its function is as follows. Involved in the gluconeogenesis. Catalyzes stereospecifically the conversion of dihydroxyacetone phosphate (DHAP) to D-glyceraldehyde-3-phosphate (G3P). This is Triosephosphate isomerase from Rhodopirellula baltica (strain DSM 10527 / NCIMB 13988 / SH1).